Reading from the N-terminus, the 51-residue chain is Glutamine synthetase (51 aa).

The protein belongs to the glutamine synthetase family. Homooctamer.

The protein localises to the cytoplasm. It carries out the reaction L-glutamate + NH4(+) + ATP = L-glutamine + ADP + phosphate + H(+). In Vitis sp. (Grape), this protein is Glutamine synthetase.